The chain runs to 319 residues: GTPase Era (319 aa).

An Era-type G domain is found at 9–196 (RSGVSLIIGR…MRTLRDLLPE (188 aa)). Positions 17–24 (GRPSSGKS) are G1. 17-24 (GRPSSGKS) is a binding site for GTP. A G2 region spans residues 43–47 (QTTRN). The interval 64 to 67 (DTPG) is G3. GTP is bound by residues 64–68 (DTPGY) and 127–130 (NKVD). The G4 stretch occupies residues 127–130 (NKVD). Residues 175 to 177 (ISA) form a G5 region. In terms of domain architecture, KH type-2 spans 227-303 (CRDELPHALY…HISLDIRVKV (77 aa)).

The protein belongs to the TRAFAC class TrmE-Era-EngA-EngB-Septin-like GTPase superfamily. Era GTPase family. Monomer.

Its subcellular location is the cytoplasm. The protein localises to the cell inner membrane. In terms of biological role, an essential GTPase that binds both GDP and GTP, with rapid nucleotide exchange. Plays a role in 16S rRNA processing and 30S ribosomal subunit biogenesis and possibly also in cell cycle regulation and energy metabolism. The polypeptide is GTPase Era (Treponema pallidum (strain Nichols)).